The primary structure comprises 658 residues: Serine/threonine-protein kinase shk1/pak1 (658 aa).

Disordered stretches follow at residues Met-1–Ile-21, Arg-39–Glu-104, Gly-126–Ile-147, and Gly-213–Asn-365. Positions Pro-66–Asp-98 are enriched in polar residues. Over residues Ser-129 to Ser-140 the composition is skewed to low complexity. A CRIB domain is found at Ile-147 to Gly-160. Low complexity-rich tracts occupy residues Pro-226–Ser-254 and Ala-262–Ser-272. Over residues Gln-273–Arg-300 the composition is skewed to polar residues. A phosphoserine mark is found at Ser-301 and Ser-303. Residues Tyr-386–Leu-637 enclose the Protein kinase domain. ATP contacts are provided by residues Ile-392–Val-400 and Lys-415. Catalysis depends on Asp-505, which acts as the Proton acceptor.

It belongs to the protein kinase superfamily. STE Ser/Thr protein kinase family. STE20 subfamily. As to quaternary structure, forms an activated complex with GTP-bound ras-like cdc42. Interacts with skb1 and the SH3 domain of skb5 via its amino-terminal regulatory domain. Skb1, cdc42 and shk1 are able to form a ternary complex in vivo. Interacts with rga8 and may interact with byr2. Autophosphorylated on serine residues.

It localises to the cytoplasm. The protein localises to the cytoskeleton. Its subcellular location is the spindle. It catalyses the reaction L-seryl-[protein] + ATP = O-phospho-L-seryl-[protein] + ADP + H(+). The enzyme catalyses L-threonyl-[protein] + ATP = O-phospho-L-threonyl-[protein] + ADP + H(+). MAP4K component of the MAPK pathway required for the mating pheromone response. Phosphorylates histone H2B to form H2BS10ph. Phosphorylates tea1. Required for skb1-dependent mitotic inhibitory function. Regulates microtubule dynamics and cell polarity. This is Serine/threonine-protein kinase shk1/pak1 (shk1) from Schizosaccharomyces pombe (strain 972 / ATCC 24843) (Fission yeast).